The chain runs to 278 residues: MFSRLSLFRRAALAPAPMRMSFRTIYQKTEDELPRRIVPKLATFYSANPNHEDRINRLERLLRKYIKLPSQNNNEAQQTKAPWISFDEYALIGGGTKLKPTQYTQLLYMLNKLHNIDPQLTNDEITSELSQYYKKSSMLSNNIKIKTLDEFGRSIAVGKRKSSTAKVFVVRGTGEILVNGRQLNDYFLKMKDRESIMYPLQVIESVGKYNIFATTSGGGPTGQAESIMHAIAKALVVFNPLLKSRLHKAGVLTRDYRHVERKKPGKKKARKMPTWVKR.

The transit peptide at 1 to 10 (MFSRLSLFRR) directs the protein to the mitochondrion. The interval 259-278 (VERKKPGKKKARKMPTWVKR) is disordered.

This sequence belongs to the universal ribosomal protein uS9 family. In terms of assembly, component of the mitochondrial small ribosomal subunit (mt-SSU). Mature yeast 74S mitochondrial ribosomes consist of a small (37S) and a large (54S) subunit. The 37S small subunit contains a 15S ribosomal RNA (15S mt-rRNA) and 34 different proteins. The 54S large subunit contains a 21S rRNA (21S mt-rRNA) and 46 different proteins.

It localises to the mitochondrion. Functionally, component of the mitochondrial ribosome (mitoribosome), a dedicated translation machinery responsible for the synthesis of mitochondrial genome-encoded proteins, including at least some of the essential transmembrane subunits of the mitochondrial respiratory chain. The mitoribosomes are attached to the mitochondrial inner membrane and translation products are cotranslationally integrated into the membrane. This Saccharomyces cerevisiae (strain ATCC 204508 / S288c) (Baker's yeast) protein is Small ribosomal subunit protein uS9m (MRPS9).